The chain runs to 203 residues: MPPMTRKTRIQPIEPVAEEDDNGYDRPSKSQLKREMHELQVLGQALVDLPKDALKRMPMPESLGDAVREARRITDHEGKRRQLQYVGRVMRSLTDDETAALRTALDAQRGVNKAATARLHWIERTREQLLASDDALTEFLRQHPDADIQEGRTLIRNARKEAQQGKPPRYFRELFQWIKAAGGASDSDDEAADDAGDDHDDEA.

2 disordered regions span residues 1–31 (MPPM…SKSQ) and 182–203 (GGAS…DDEA). A compositionally biased stretch (acidic residues) spans 186 to 203 (DSDDEAADDAGDDHDDEA).

The protein belongs to the DarP family.

It is found in the cytoplasm. Functionally, member of a network of 50S ribosomal subunit biogenesis factors which assembles along the 30S-50S interface, preventing incorrect 23S rRNA structures from forming. Promotes peptidyl transferase center (PTC) maturation. The polypeptide is Dual-action ribosomal maturation protein DarP (Burkholderia cenocepacia (strain HI2424)).